The chain runs to 160 residues: Probable chemoreceptor glutamine deamidase CheD 1 (160 aa).

This sequence belongs to the CheD family.

It carries out the reaction L-glutaminyl-[protein] + H2O = L-glutamyl-[protein] + NH4(+). Probably deamidates glutamine residues to glutamate on methyl-accepting chemotaxis receptors (MCPs), playing an important role in chemotaxis. This Syntrophus aciditrophicus (strain SB) protein is Probable chemoreceptor glutamine deamidase CheD 1.